Here is a 684-residue protein sequence, read N- to C-terminus: MSGRQRSVAAAVHHQRQLSDNPLDMSSSNGRWLQSTGLQHFQSSANDYGYYAGGQGGGGQAARGYQNAQRGNEFFGEPTTPQYGARPTNQRKNNDESEFSPGLLDLHSFDTELLPEIPVSNQLDGPSLFNPSQGQSFDDFEAYNKQPNRSRVLAENLAAEKERMNAVAKIKVVVRKRPLNKKESTKNEEDIVDTHANCLTVHETKLKVDLTAYVEKHEFVFDAVLDEEVSNDEVYRETVEPVVPLIFQRIKATCFAYGQTGSGKTYTMKPLPLKASRDILRLMHHTYRNQGFQLFVSFFEIYGGKLYDLLSERKKLCMREDGKQQVCIVGLQEYRVSDTDAIMELIERGSATRSTGTTGANEESSRSHAILQLAIKKSVEGNQSKPPRLVGKLSFIDLAGSERGADTTDNDKQTRLEGAEINKSLLALKECIRALDNDQGHIPFRGSKLTEVLRDSFMGNSRTVMISCISPSSGSCEHTLNTLRYADRVKSLSKGNASKKDVSSSTMNLRESTKIPLSSALPTPSNFDDDVNEMWTEENDEFDASDYEQDKQMWKKNGKLEPSYNGMAQERIPKPTIQMKSRDMPRPDMKKSNSDDNLNALLQEEEDLVNAHRKQVEDTMNIVKEEMNLLVEADQPGNQLDGYISRLNTILSQKAAGILQLQNRLAHFQKRLREHNVLVSTTGY.

2 disordered regions span residues M1–R31 and G71–L103. 2 stretches are compositionally biased toward polar residues: residues L18–R31 and T79–R91. A Kinesin motor domain is found at K169 to L492. Residue G258–T265 participates in ATP binding. Residues K574–S594 are disordered. A compositionally biased stretch (basic and acidic residues) spans K580–S594. Residues D596–E626 adopt a coiled-coil conformation.

Belongs to the TRAFAC class myosin-kinesin ATPase superfamily. Kinesin family. KIN-13 subfamily.

Its function is as follows. Acts redundantly with KIN13A to modulate cell wall synthesis and cell expansion via the THE1 pathway. This chain is Kinesin-like protein KIN-13B, found in Arabidopsis thaliana (Mouse-ear cress).